A 302-amino-acid polypeptide reads, in one-letter code: 4-hydroxy-tetrahydrodipicolinate synthase (302 aa).

Position 57 (threonine 57) interacts with pyruvate. The Proton donor/acceptor role is filled by tyrosine 145. The active-site Schiff-base intermediate with substrate is the lysine 173. Pyruvate is bound at residue isoleucine 213.

It belongs to the DapA family. In terms of assembly, homotetramer; dimer of dimers.

It localises to the cytoplasm. It carries out the reaction L-aspartate 4-semialdehyde + pyruvate = (2S,4S)-4-hydroxy-2,3,4,5-tetrahydrodipicolinate + H2O + H(+). Its pathway is amino-acid biosynthesis; L-lysine biosynthesis via DAP pathway; (S)-tetrahydrodipicolinate from L-aspartate: step 3/4. Functionally, catalyzes the condensation of (S)-aspartate-beta-semialdehyde [(S)-ASA] and pyruvate to 4-hydroxy-tetrahydrodipicolinate (HTPA). The protein is 4-hydroxy-tetrahydrodipicolinate synthase of Mycolicibacterium gilvum (strain PYR-GCK) (Mycobacterium gilvum (strain PYR-GCK)).